Consider the following 351-residue polypeptide: Adenine deaminase (351 aa).

Zn(2+) is bound by residues H20, H22, and H200. Catalysis depends on E203, which acts as the Proton donor. D281 lines the Zn(2+) pocket. Residue D282 coordinates substrate.

It belongs to the metallo-dependent hydrolases superfamily. Adenosine and AMP deaminases family. Adenine deaminase type 2 subfamily. Zn(2+) is required as a cofactor.

The enzyme catalyses adenine + H2O + H(+) = hypoxanthine + NH4(+). Functionally, catalyzes the hydrolytic deamination of adenine to hypoxanthine. Plays an important role in the purine salvage pathway and in nitrogen catabolism. The polypeptide is Adenine deaminase (Cupriavidus necator (strain ATCC 17699 / DSM 428 / KCTC 22496 / NCIMB 10442 / H16 / Stanier 337) (Ralstonia eutropha)).